The primary structure comprises 104 residues: MTQVAKNDHRLMQVLLAPVVSEKATLVAEKNEQVVFEVARDANKGEVKAAVELLFKVEVESVQILNQKGKQKRFGRFMGRRDHVKKAYVSLKPGQEINFEAEAK.

This sequence belongs to the universal ribosomal protein uL23 family. Part of the 50S ribosomal subunit. Contacts protein L29, and trigger factor when it is bound to the ribosome.

Functionally, one of the early assembly proteins it binds 23S rRNA. One of the proteins that surrounds the polypeptide exit tunnel on the outside of the ribosome. Forms the main docking site for trigger factor binding to the ribosome. The chain is Large ribosomal subunit protein uL23 from Ralstonia pickettii (strain 12J).